The following is a 201-amino-acid chain: Recombination protein RecR (201 aa).

Residues 60 to 75 (CSCCGNVDTIDPCTVC) form a C4-type zinc finger. Residues 83–178 (SVIIVVEDVS…KITRLAHGVP (96 aa)) form the Toprim domain.

It belongs to the RecR family.

In terms of biological role, may play a role in DNA repair. It seems to be involved in an RecBC-independent recombinational process of DNA repair. It may act with RecF and RecO. In Agrobacterium fabrum (strain C58 / ATCC 33970) (Agrobacterium tumefaciens (strain C58)), this protein is Recombination protein RecR.